Reading from the N-terminus, the 424-residue chain is Gamma-glutamyl phosphate reductase (424 aa).

Belongs to the gamma-glutamyl phosphate reductase family.

It is found in the cytoplasm. It carries out the reaction L-glutamate 5-semialdehyde + phosphate + NADP(+) = L-glutamyl 5-phosphate + NADPH + H(+). The protein operates within amino-acid biosynthesis; L-proline biosynthesis; L-glutamate 5-semialdehyde from L-glutamate: step 2/2. Functionally, catalyzes the NADPH-dependent reduction of L-glutamate 5-phosphate into L-glutamate 5-semialdehyde and phosphate. The product spontaneously undergoes cyclization to form 1-pyrroline-5-carboxylate. The sequence is that of Gamma-glutamyl phosphate reductase from Dehalococcoides mccartyi (strain CBDB1).